Reading from the N-terminus, the 215-residue chain is Chaperone protein TorD (215 aa).

This sequence belongs to the TorD/DmsD family. TorD subfamily.

The protein resides in the cytoplasm. Its function is as follows. Involved in the biogenesis of TorA. Acts on TorA before the insertion of the molybdenum cofactor and, as a result, probably favors a conformation of the apoenzyme that is competent for acquiring the cofactor. This chain is Chaperone protein TorD, found in Vibrio vulnificus (strain CMCP6).